We begin with the raw amino-acid sequence, 357 residues long: Alanine racemase (357 aa).

The Proton acceptor; specific for D-alanine role is filled by Lys33. Lys33 carries the post-translational modification N6-(pyridoxal phosphate)lysine. Substrate is bound at residue Arg129. The active-site Proton acceptor; specific for L-alanine is Tyr253. Position 301 (Met301) interacts with substrate.

This sequence belongs to the alanine racemase family. In terms of assembly, homodimer. It depends on pyridoxal 5'-phosphate as a cofactor.

The catalysed reaction is L-alanine = D-alanine. It functions in the pathway amino-acid biosynthesis; D-alanine biosynthesis; D-alanine from L-alanine: step 1/1. Its function is as follows. Catalyzes the interconversion of L-alanine and D-alanine. Is highly specific for alanine as substrate. May serve both anabolic and catabolic purposes. The polypeptide is Alanine racemase (Pseudomonas taetrolens).